Here is a 354-residue protein sequence, read N- to C-terminus: Uroporphyrinogen decarboxylase (354 aa).

Residues 27 to 31, Asp-77, Tyr-153, Thr-208, and His-326 each bind substrate; that span reads RQAGR.

This sequence belongs to the uroporphyrinogen decarboxylase family. In terms of assembly, homodimer.

The protein localises to the cytoplasm. It catalyses the reaction uroporphyrinogen III + 4 H(+) = coproporphyrinogen III + 4 CO2. Its pathway is porphyrin-containing compound metabolism; protoporphyrin-IX biosynthesis; coproporphyrinogen-III from 5-aminolevulinate: step 4/4. Catalyzes the decarboxylation of four acetate groups of uroporphyrinogen-III to yield coproporphyrinogen-III. This Neisseria meningitidis serogroup C (strain 053442) protein is Uroporphyrinogen decarboxylase.